The following is a 125-amino-acid chain: Small ribosomal subunit protein uS13 (125 aa).

It belongs to the universal ribosomal protein uS13 family. As to quaternary structure, part of the 30S ribosomal subunit. Forms a loose heterodimer with protein S19. Forms two bridges to the 50S subunit in the 70S ribosome.

In terms of biological role, located at the top of the head of the 30S subunit, it contacts several helices of the 16S rRNA. In the 70S ribosome it contacts the 23S rRNA (bridge B1a) and protein L5 of the 50S subunit (bridge B1b), connecting the 2 subunits; these bridges are implicated in subunit movement. Contacts the tRNAs in the A and P-sites. In Rickettsia bellii (strain OSU 85-389), this protein is Small ribosomal subunit protein uS13.